The primary structure comprises 72 residues: Protein P13 (72 aa).

It is found in the virion membrane. The chain is Protein P13 (P13) from Pseudomonas phage phi6 (Bacteriophage phi-6).